A 37-amino-acid polypeptide reads, in one-letter code: Large ribosomal subunit protein bL36 (37 aa).

The protein belongs to the bacterial ribosomal protein bL36 family.

This is Large ribosomal subunit protein bL36 from Magnetococcus marinus (strain ATCC BAA-1437 / JCM 17883 / MC-1).